Here is a 108-residue protein sequence, read N- to C-terminus: Curli assembly protein CsgC (108 aa).

A signal peptide spans 1–8 (MHTLLLLA).

It belongs to the CsgC/AgfC family.

Its subcellular location is the periplasm. Plays a role in the extracellular assembly of CsgA into thin aggregative fimbriae (Tafi) fibers. Assembly may also require CsgE. Tafi are thought to be assembled via an extracellular nucleation-precipitation (ENP) pathway, and possibly also via an intracellular non-CsgC-dependent pathway. This chain is Curli assembly protein CsgC, found in Salmonella arizonae (strain ATCC BAA-731 / CDC346-86 / RSK2980).